Here is a 214-residue protein sequence, read N- to C-terminus: Probable transaldolase (214 aa).

Lys83 acts as the Schiff-base intermediate with substrate in catalysis.

The protein belongs to the transaldolase family. Type 3B subfamily.

It localises to the cytoplasm. The catalysed reaction is D-sedoheptulose 7-phosphate + D-glyceraldehyde 3-phosphate = D-erythrose 4-phosphate + beta-D-fructose 6-phosphate. It functions in the pathway carbohydrate degradation; pentose phosphate pathway; D-glyceraldehyde 3-phosphate and beta-D-fructose 6-phosphate from D-ribose 5-phosphate and D-xylulose 5-phosphate (non-oxidative stage): step 2/3. In terms of biological role, transaldolase is important for the balance of metabolites in the pentose-phosphate pathway. This chain is Probable transaldolase (tal), found in Streptococcus pyogenes serotype M1.